The chain runs to 122 residues: UPF0102 protein Smed_3545 (122 aa).

Belongs to the UPF0102 family.

The protein is UPF0102 protein Smed_3545 of Sinorhizobium medicae (strain WSM419) (Ensifer medicae).